The primary structure comprises 309 residues: Tumor necrosis factor ligand superfamily member 9 (309 aa).

Positions 1–16 (MDQHTLDVEDTADARH) are enriched in basic and acidic residues. Positions 1-20 (MDQHTLDVEDTADARHPAGT) are disordered. Over 1–82 (MDQHTLDVED…ALNFCSRHPK (82 aa)) the chain is Cytoplasmic. The helical; Signal-anchor for type II membrane protein transmembrane segment at 83–103 (LYGLVALVLLLLIAACVPIFT) threads the bilayer. The Extracellular segment spans residues 104–309 (RTEPRPALTI…FLVKPDNPWE (206 aa)). N-linked (GlcNAc...) asparagine glycans are attached at residues asparagine 139, asparagine 161, and asparagine 293. A THD domain is found at 147 to 302 (VFAKLLAKNQ…NTTSFGLFLV (156 aa)).

This sequence belongs to the tumor necrosis factor family. As to quaternary structure, homotrimer.

It localises to the membrane. Functionally, cytokine that binds to TNFRSF9. Induces the proliferation of activated peripheral blood T-cells. May have a role in activation-induced cell death (AICD). May play a role in cognate interactions between T-cells and B-cells/macrophages. The chain is Tumor necrosis factor ligand superfamily member 9 (Tnfsf9) from Mus musculus (Mouse).